Reading from the N-terminus, the 358-residue chain is Acid phosphatase (358 aa).

The signal sequence occupies residues 1–17; that stretch reads MKFSTIALPLLASAALA. N-linked (GlcNAc...) asparagine glycosylation is found at Asn20, Asn27, and Asn32. Residues 21 to 41 are disordered; it reads SSHSGTNATSHNSTVPNENSK. Mg(2+) is bound by residues Asp49, Asp50, and Ser81. N-linked (GlcNAc...) asparagine glycans are attached at residues Asn92 and Asn145. Asn156 contributes to the Mg(2+) binding site. Residue Ser189 is part of the active site. 2 N-linked (GlcNAc...) asparagine glycosylation sites follow: Asn199 and Asn278.

The protein belongs to the SurE nucleotidase family. Requires Mg(2+) as cofactor.

It is found in the secreted. It catalyses the reaction a phosphate monoester + H2O = an alcohol + phosphate. In terms of biological role, probably serves to scavenge phosphorus for growing cells. The chain is Acid phosphatase (PHO2) from Yarrowia lipolytica (strain CLIB 122 / E 150) (Yeast).